Here is a 219-residue protein sequence, read N- to C-terminus: Response regulator ArlR (219 aa).

The region spanning 3–116 (NILIVEDEQN…ELLARIRAVL (114 aa)) is the Response regulatory domain. D52 carries the post-translational modification 4-aspartylphosphate. The ompR/PhoB-type DNA-binding region spans 122 to 219 (KDVLDINGII…TVRGVGYVIR (98 aa)).

Phosphorylated by ArlS.

The protein localises to the cytoplasm. Member of the two-component regulatory system ArlS/ArlR. The protein is Response regulator ArlR (arlR) of Staphylococcus epidermidis (strain ATCC 12228 / FDA PCI 1200).